A 352-amino-acid polypeptide reads, in one-letter code: Histidine biosynthesis bifunctional protein HisB (352 aa).

The interval 1–163 (MKKILFIDRD…MVASAIINDA (163 aa)) is histidinol-phosphatase. D8 serves as the catalytic Nucleophile. Mg(2+)-binding residues include D8 and D10. D10 functions as the Proton donor in the catalytic mechanism. Zn(2+) contacts are provided by C91, H93, C99, and C101. D128 serves as a coordination point for Mg(2+). The tract at residues 164–352 (RKASVQRKTK…NYLPSTKGVL (189 aa)) is imidazoleglycerol-phosphate dehydratase.

It in the N-terminal section; belongs to the histidinol-phosphatase family. The protein in the C-terminal section; belongs to the imidazoleglycerol-phosphate dehydratase family. The cofactor is Mg(2+). Zn(2+) serves as cofactor.

Its subcellular location is the cytoplasm. The catalysed reaction is D-erythro-1-(imidazol-4-yl)glycerol 3-phosphate = 3-(imidazol-4-yl)-2-oxopropyl phosphate + H2O. The enzyme catalyses L-histidinol phosphate + H2O = L-histidinol + phosphate. The protein operates within amino-acid biosynthesis; L-histidine biosynthesis; L-histidine from 5-phospho-alpha-D-ribose 1-diphosphate: step 6/9. It participates in amino-acid biosynthesis; L-histidine biosynthesis; L-histidine from 5-phospho-alpha-D-ribose 1-diphosphate: step 8/9. The protein is Histidine biosynthesis bifunctional protein HisB of Legionella pneumophila subsp. pneumophila (strain Philadelphia 1 / ATCC 33152 / DSM 7513).